The following is a 957-amino-acid chain: Glycine dehydrogenase (decarboxylating) (957 aa).

K708 is subject to N6-(pyridoxal phosphate)lysine.

This sequence belongs to the GcvP family. The glycine cleavage system is composed of four proteins: P, T, L and H. Pyridoxal 5'-phosphate is required as a cofactor.

The enzyme catalyses N(6)-[(R)-lipoyl]-L-lysyl-[glycine-cleavage complex H protein] + glycine + H(+) = N(6)-[(R)-S(8)-aminomethyldihydrolipoyl]-L-lysyl-[glycine-cleavage complex H protein] + CO2. The glycine cleavage system catalyzes the degradation of glycine. The P protein binds the alpha-amino group of glycine through its pyridoxal phosphate cofactor; CO(2) is released and the remaining methylamine moiety is then transferred to the lipoamide cofactor of the H protein. The protein is Glycine dehydrogenase (decarboxylating) of Shigella sonnei (strain Ss046).